The primary structure comprises 1321 residues: MELEDGVVYQEEPGGSGAVMSERVSGLAGSIYREFERLIGRYDEEVVKELMPLVVAVLENLDSVFAQDQEHQVELELLRDDNEQLITQYEREKALRKHAEEKFIEFEDSQEQEKKDLQTRVESLESQTRQLELKAKNYADQISRLEEREAELKKEYNALHQRHTEMIHNYMEHLERTKLHQLSGSDQLESTAHSRIRKERPISLGIFPLPAGDGLLTPDAQKGGETPGSEQWKFQELSQPRSHTSLKVSNSPEPQKAVEQEDELSDVSQGGSKATTPASTANSDVATIPTDTPLKEENEGFVKVTDAPNKSEISKHIEVQVAQETRNVSTGSAENEEKSEVQAIIESTPELDMDKDLSGYKGSSTPTKGIENKAFDRNTESLFEELSSAGSGLIGDVDEGADLLGMGREVENLILENTQLLETKNALNIVKNDLIAKVDELTCEKDVLQGELEAVKQAKLKLEEKNRELEEELRKARAEAEDARQKAKDDDDSDIPTAQRKRFTRVEMARVLMERNQYKERLMELQEAVRWTEMIRASRENPAMQEKKRSSIWQFFSRLFSSSSNTTKKPEPPVNLKYNAPTSHVTPSVKKRSSTLSQLPGDKSKAFDFLSEETEASLASRREQKREQYRQVKAHVQKEDGRVQAFGWSLPQKYKQVTNGQGENKMKNLPVPVYLRPLDEKDTSMKLWCAVGVNLSGGKTRDGGSVVGASVFYKDVAGLDTEGSKQRSASQSSLDKLDQELKEQQKELKNQEELSSLVWICTSTHSATKVLIIDAVQPGNILDSFTVCNSHVLCIASVPGARETDYPAGEDLSESGQVDKASLCGSMTSNSSAETDSLLGGITVVGCSAEGVTGAATSPSTNGASPVMDKPPEMEAENSEVDENVPTAEEATEATEGNAGSAEDTVDISQTGVYTEHVFTDPLGVQIPEDLSPVYQSSNDSDAYKDQISVLPNEQDLVREEAQKMSSLLPTMWLGAQNGCLYVHSSVAQWRKCLHSIKLKDSILSIVHVKGIVLVALADGTLAIFHRGVDGQWDLSNYHLLDLGRPHHSIRCMTVVHDKVWCGYRNKIYVVQPKAMKIEKSFDAHPRKESQVRQLAWVGDGVWVSIRLDSTLRLYHAHTYQHLQDVDIEPYVSKMLGTGKLGFSFVRITALMVSCNRLWVGTGNGVIISIPLTETNKTSGVPGNRPGSVIRVYGDENSDKVTPGTFIPYCSMAHAQLCFHGHRDAVKFFVAVPGQVISPQSSSSGTDLTGDKAGPSAQEPGSQTPLKSMLVISGGEGYIDFRMGDEGGESELLGEDLPLEPSVTKAERSHLIVWQVMYGNE.

An N-acetylmethionine modification is found at methionine 1. The 89-residue stretch at valine 7 to leucine 95 folds into the RH1 domain. Residues alanine 66–methionine 166 are a coiled coil. Phosphoserine occurs at positions 109, 183, 185, 194, and 203. Residues serine 203–threonine 292 form a disordered region. Threonine 217 carries the post-translational modification Phosphothreonine. Positions glutamate 236–glutamate 253 are enriched in polar residues. Phosphoserine occurs at positions 238, 251, 265, 268, and 272. Over residues aspartate 266 to valine 285 the composition is skewed to polar residues. Position 292 is a phosphothreonine (threonine 292). Residues serine 311, serine 329, serine 332, and serine 347 each carry the phosphoserine modification. 3 positions are modified to phosphothreonine: threonine 348, threonine 365, and threonine 418. Residues arginine 408–methionine 534 are a coiled coil. Residues leucine 473–aspartate 489 are compositionally biased toward basic and acidic residues. Disordered stretches follow at residues leucine 473 to arginine 500 and serine 563 to proline 600. The region spanning arginine 500–glutamate 571 is the RH2 domain. Threonine 586 is subject to Phosphothreonine. Serine 588 carries the phosphoserine modification. A Phosphothreonine modification is found at threonine 595. A phosphoserine mark is found at serine 705, serine 728, serine 730, serine 732, and serine 733. Residues serine 724–valine 758 are a coiled coil. The interval glycine 854 to valine 906 is disordered. Positions alanine 855–alanine 864 are enriched in polar residues. Positions methionine 874 to glutamate 883 are enriched in acidic residues. The span at alanine 894–glutamate 903 shows a compositional bias: low complexity. Serine 1188 carries the post-translational modification Phosphoserine. Positions proline 1239–leucine 1266 are disordered. A Phosphothreonine modification is found at threonine 1264.

This sequence belongs to the JIP scaffold family. In terms of assembly, homodimer. The homodimer interacts with ARF6, forming a heterotetramer. Homooligomer. Interacts with MAX, MAPK14, MAP3K3, MYC, KNS2 and MAP2K4. Interaction with KNS2 is important in the formation of ternary complex with MAPK8. Interacts with NFKB1. Interacts with PIP4P1. Interacts with PIKFYVE. Interacts with MAPK8, MAPK9, MAPK10. Phosphorylated by MAPK8 and MAPK14. Expressed only in testis on the round spermatids of stage I, II and II. Absent in spermatogonia and spermatocyte. As to expression, expressed in testis and in acute myeloid leukemia (AML) patients. In terms of tissue distribution, expressed in testis.

The protein localises to the cytoplasm. Its subcellular location is the perinuclear region. The protein resides in the lysosome membrane. It is found in the cytoplasmic vesicle. It localises to the secretory vesicle. The protein localises to the acrosome. With respect to regulation, may play a role in spermatozoa-egg-interaction. The JNK-interacting protein (JIP) group of scaffold proteins selectively mediates JNK signaling by aggregating specific components of the MAPK cascade to form a functional JNK signaling module. Regulates lysosomal positioning by acting as an adapter protein which links PIP4P1-positive lysosomes to the dynein-dynactin complex. Assists PIKFYVE selective functionality in microtubule-based endosome-to-TGN trafficking. This is C-Jun-amino-terminal kinase-interacting protein 4 from Homo sapiens (Human).